We begin with the raw amino-acid sequence, 511 residues long: MRLEDLARVINPSEAGGSLALEIEGLYCDSRQVRSGGLFFALRGVATDGHDYIVASRDRGAVAVVVEDPSRVPEGMTWLKVDDARLAMSRAAAAFYGNPTDGIPVVGITGTNGKTTTTYLVEAVMARAGIPVAVLGTISYRFGDKTIPAPHTTPESVDLQRTIRDLVDRGAQGVVMEVSSHALEQRRVDGCRFDVGVFTNLTRDHLDYHRDMESYFESKARLFTELLAADDTKPRRAAVINVDDPYGARLASDAVAPVVSYGLSPSVMVRAEMVTFSVDGISGTLVTPLGTIPFHSRLLGRFNLYNILAAVAAGVALGLSPDAIRGGIEGDVRVPGRLERVDNDHGITVLVDYAHTGDALENVLKTVAEIATGRIITVFGCGGDRDRGKRPVMGEIAGRFSDLSIVTSDNPRTEDAGAIIGEILGGIRSLGLREYGAEELITGFDAKGFAAVESRREAIRLAARVARPGDVLLLAGKGHEDYQIIGTMKHHFDDREEVAAAFRELSSKGQG.

Ser-30 is a UDP-N-acetyl-alpha-D-muramoyl-L-alanyl-D-glutamate binding site. 110–116 (GTNGKTT) contacts ATP. UDP-N-acetyl-alpha-D-muramoyl-L-alanyl-D-glutamate contacts are provided by residues 152 to 153 (TT), Ser-179, Gln-185, and Arg-187. Lys-219 is subject to N6-carboxylysine. Residues Arg-385, 409–412 (DNPR), Gly-476, and Glu-480 contribute to the meso-2,6-diaminopimelate site. The short motif at 409–412 (DNPR) is the Meso-diaminopimelate recognition motif element.

It belongs to the MurCDEF family. MurE subfamily. The cofactor is Mg(2+). Post-translationally, carboxylation is probably crucial for Mg(2+) binding and, consequently, for the gamma-phosphate positioning of ATP.

Its subcellular location is the cytoplasm. It carries out the reaction UDP-N-acetyl-alpha-D-muramoyl-L-alanyl-D-glutamate + meso-2,6-diaminopimelate + ATP = UDP-N-acetyl-alpha-D-muramoyl-L-alanyl-gamma-D-glutamyl-meso-2,6-diaminopimelate + ADP + phosphate + H(+). The protein operates within cell wall biogenesis; peptidoglycan biosynthesis. In terms of biological role, catalyzes the addition of meso-diaminopimelic acid to the nucleotide precursor UDP-N-acetylmuramoyl-L-alanyl-D-glutamate (UMAG) in the biosynthesis of bacterial cell-wall peptidoglycan. The polypeptide is UDP-N-acetylmuramoyl-L-alanyl-D-glutamate--2,6-diaminopimelate ligase (Geobacter metallireducens (strain ATCC 53774 / DSM 7210 / GS-15)).